The sequence spans 513 residues: Lysine--tRNA ligase (513 aa).

Mg(2+)-binding residues include E423 and E430.

Belongs to the class-II aminoacyl-tRNA synthetase family. As to quaternary structure, homodimer. Mg(2+) serves as cofactor.

Its subcellular location is the cytoplasm. The catalysed reaction is tRNA(Lys) + L-lysine + ATP = L-lysyl-tRNA(Lys) + AMP + diphosphate. The sequence is that of Lysine--tRNA ligase from Anaeromyxobacter dehalogenans (strain 2CP-C).